We begin with the raw amino-acid sequence, 121 residues long: MSSPHVLVVDDTLVDRHVVSMALMRHNVRVTAVESVMQALMFLDSEHDVNMIVSDYCMPDMTGYDLLMEVKKSPKLAHLPVVIASSDNIPERIRKCLDGGAKDYILKPVKIVDLPRILNYI.

A Response regulatory domain is found at 5–121 (HVLVVDDTLV…VDLPRILNYI (117 aa)). Asp55 is modified (4-aspartylphosphate).

It belongs to the ARR family. Type-A subfamily. Post-translationally, two-component system major event consists of a His-to-Asp phosphorelay between a sensor histidine kinase (HK) and a response regulator (RR). In plants, the His-to-Asp phosphorelay involves an additional intermediate named Histidine-containing phosphotransfer protein (HPt). This multistep phosphorelay consists of a His-Asp-His-Asp sequential transfer of a phosphate group between first a His and an Asp of the HK protein, followed by the transfer to a conserved His of the HPt protein and finally the transfer to an Asp in the receiver domain of the RR protein. Expressed in flowers and panicles.

Its function is as follows. Functions as a response regulator involved in His-to-Asp phosphorelay signal transduction system. Phosphorylation of the Asp residue in the receiver domain activates the ability of the protein to promote the transcription of target genes. Type-A response regulators seem to act as negative regulators of the cytokinin signaling. The sequence is that of Two-component response regulator ORR12 from Oryza sativa subsp. japonica (Rice).